The following is a 142-amino-acid chain: Cellulose/chitin binding protein BQ2027_MB2009 (142 aa).

Residues 1-37 form the signal peptide; that stretch reads MAGLNIYVRRWRTALHATVSALIVAILGLAITPVASA. A CBM2 domain is found at 38–142; that stretch reads ATARATLSVT…CLLNGQYPCT (105 aa).

The protein localises to the secreted. Its subcellular location is the cell wall. It localises to the cell membrane. Carbohydrate binding protein that binds chitin and cellulose. Lacks enzymatic activity and does not hydrolyze chitin and cellulose. May interact with mycobacterial biofilms, which are rich in cellulose, and play a role in biofilm formation. Could also act as an adhesin, improving the initial attachment to host cells and aiding M.bovis during the initial stages of infection. Its function is as follows. May act as a virulence factor that modulates host immune responses and contributes to host immune evasion. This chain is Cellulose/chitin binding protein BQ2027_MB2009, found in Mycobacterium bovis (strain ATCC BAA-935 / AF2122/97).